Consider the following 589-residue polypeptide: NADP-dependent malic enzyme (589 aa).

The active-site Proton donor is the tyrosine 137. An NAD(+)-binding site is contributed by arginine 190. The active-site Proton acceptor is the lysine 208. Positions 280, 281, and 304 each coordinate a divalent metal cation. Residue aspartate 304 coordinates NAD(+). 333–349 contacts NADP(+); it reads LFLGAGEAGTGIAELIA. Asparagine 445 is a binding site for NAD(+).

It belongs to the malic enzymes family. In terms of assembly, homotetramer. Mg(2+) is required as a cofactor. The cofactor is Mn(2+).

It localises to the cytoplasm. The enzyme catalyses (S)-malate + NADP(+) = pyruvate + CO2 + NADPH. It catalyses the reaction oxaloacetate + H(+) = pyruvate + CO2. The sequence is that of NADP-dependent malic enzyme (ME1) from Phaseolus vulgaris (Kidney bean).